The sequence spans 323 residues: Methenyltetrahydromethanopterin cyclohydrolase (323 aa).

This sequence belongs to the MCH family.

It localises to the cytoplasm. It catalyses the reaction 5,10-methenyl-5,6,7,8-tetrahydromethanopterin + H2O = N(5)-formyl-5,6,7,8-tetrahydromethanopterin + H(+). Its pathway is one-carbon metabolism; methanogenesis from CO(2); 5,10-methenyl-5,6,7,8-tetrahydromethanopterin from CO(2): step 3/3. In terms of biological role, catalyzes the reversible interconversion of 5-formyl-H(4)MPT to methenyl-H(4)MPT(+). The protein is Methenyltetrahydromethanopterin cyclohydrolase of Methanococcus maripaludis (strain DSM 14266 / JCM 13030 / NBRC 101832 / S2 / LL).